A 363-amino-acid polypeptide reads, in one-letter code: Chorismate synthase (363 aa).

NADP(+)-binding residues include Arg-47 and Arg-53. Residues 124 to 126 (RSS), Gly-286, 301 to 305 (KPTAT), and Arg-327 contribute to the FMN site.

It belongs to the chorismate synthase family. Homotetramer. The cofactor is FMNH2.

The catalysed reaction is 5-O-(1-carboxyvinyl)-3-phosphoshikimate = chorismate + phosphate. It participates in metabolic intermediate biosynthesis; chorismate biosynthesis; chorismate from D-erythrose 4-phosphate and phosphoenolpyruvate: step 7/7. Functionally, catalyzes the anti-1,4-elimination of the C-3 phosphate and the C-6 proR hydrogen from 5-enolpyruvylshikimate-3-phosphate (EPSP) to yield chorismate, which is the branch point compound that serves as the starting substrate for the three terminal pathways of aromatic amino acid biosynthesis. This reaction introduces a second double bond into the aromatic ring system. The protein is Chorismate synthase of Thermosynechococcus vestitus (strain NIES-2133 / IAM M-273 / BP-1).